Here is a 574-residue protein sequence, read N- to C-terminus: Glutamate--tRNA ligase (574 aa).

Positions 109–119 match the 'HIGH' region motif; it reads PNPDFVIHMGN.

This sequence belongs to the class-I aminoacyl-tRNA synthetase family. Glutamate--tRNA ligase type 2 subfamily.

The protein localises to the cytoplasm. The enzyme catalyses tRNA(Glu) + L-glutamate + ATP = L-glutamyl-tRNA(Glu) + AMP + diphosphate. In terms of biological role, catalyzes the attachment of glutamate to tRNA(Glu) in a two-step reaction: glutamate is first activated by ATP to form Glu-AMP and then transferred to the acceptor end of tRNA(Glu). The chain is Glutamate--tRNA ligase from Aeropyrum pernix (strain ATCC 700893 / DSM 11879 / JCM 9820 / NBRC 100138 / K1).